The primary structure comprises 1253 residues: Latent-transforming growth factor beta-binding protein 3 (1253 aa).

The first 38 residues, 1–38, serve as a signal peptide directing secretion; it reads MPGPRGAAHGLAPAMRQAGALGLLALLLLALLGPGGGA. N86 is a glycosylation site (N-linked (GlcNAc...) asparagine). The region spanning 106–138 is the EGF-like 1 domain; the sequence is RVVVCPLPCMNGGQCSSRNQCLCPPDFTGRFCQ. 3 disulfides stabilise this stretch: C110–C120, C114–C126, and C128–C137. The interval 244-270 is disordered; that stretch reads GPNAEGPASSQHLLPHPKPQHPRPPTQ. The TB 1 domain maps to 274–328; that stretch reads GRCFQDTLPKQPCGSNPLPGLTKQEDCCGSIGTAWGQSKCHKCPQLQYTGVQKPG. Intrachain disulfides connect C276–C300, C286–C313, and C301–C316. N-linked (GlcNAc...) asparagine glycosylation is present at N346. The EGF-like 2; calcium-binding domain occupies 352 to 392; sequence DINECAMPGMCRHGDCLNNPGSYRCVCPPGHSLGPSRTQCI. 7 disulfide bridges follow: C356-C367, C362-C376, C378-C391, C402-C425, C412-C437, C426-C440, and C427-C452. The 53-residue stretch at 400-452 folds into the TB 2 domain; it reads SLCFRLVSTEHQCQHPLTTRLTRQLCCCSVGKAWGARCQRCPADGTAAFKEIC. A disordered region spans residues 475-555; that stretch reads FSLFLHPDGP…PTFHRFLPDL (81 aa). The 42-residue stretch at 571 to 612 folds into the EGF-like 3 domain; that stretch reads ETDECRLNQNICGHGQCVPGPSDYSCHCNAGYRSHPQHRYCV. 32 cysteine pairs are disulfide-bonded: C575–C587, C582–C596, C598–C611, C617–C629, C622–C638, C661–C673, C667–C682, C684–C698, C745–C756, C751–C765, C767–C780, C786–C797, C792–C806, C808–C821, C827–C838, C833–C847, C849–C861, C867–C880, C874–C889, C891–C904, C916–C939, C926–C951, C940–C956, C941–C968, C994–C1007, C1002–C1016, C1018–C1031, C1037–C1048, C1043–C1057, C1059–C1072, C1113–C1127, and C1114–C1136. In terms of domain architecture, EGF-like 4; calcium-binding spans 613–656; it reads DVNECEAEPCGPGKGICMNTGGSYNCHCNRGYRLHVGAGGRSCV. Residues 657–699 form the EGF-like 5; calcium-binding domain; it reads DLNECTKPHLCGDGGFCINFPGHYKCNCYPGYRLKASRPPICE. The EGF-like 6; calcium-binding domain maps to 741–781; sequence DVNECSEGTPCSPGWCENLPGSYRCTCAQGYEPAQDGLSCI. The EGF-like 7; calcium-binding domain maps to 782-822; sequence DVDECEAGKVCQDGICTNTPGSFQCQCLSGYHLSRDRSRCE. Residues 823–861 enclose the EGF-like 8; calcium-binding domain; sequence DIDECDFPAACIGGDCINTNGSYRCLCPQGHRLVGGRKC. N842 is a glycosylation site (N-linked (GlcNAc...) asparagine). The 43-residue stretch at 863–905 folds into the EGF-like 9; calcium-binding domain; it reads DIDECSQDPGLCLPHGACENLQGSYVCVCDEGFTLTQDQHGCE. One can recognise a TB 3 domain in the interval 914–968; the sequence is KECYLNFDDTVFCDSVLATNVTQQECCCSLGAGWGDHCEIYPCPVYSSAEFHSLC. N-linked (GlcNAc...) asparagine glycosylation occurs at N933. One can recognise an EGF-like 10; calcium-binding domain in the interval 990–1032; sequence DIDECILFGAEICKEGKCVNTQPGYECYCKQGFYYDGNLLECV. The region spanning 1033-1072 is the EGF-like 11; calcium-binding domain; it reads DVDECLDESNCRNGVCENTRGGYRCACTPPAEYSPAQRQC. Residues 1086 to 1136 form the TB 4 domain; it reads EVCWGQRGEDGMCMGPLAGPALTFDDCCCRQGRGWGTQCRPCPPRGTGSQC. Over residues 1138 to 1148 the composition is skewed to polar residues; sequence TSQSESNSFWD. The disordered stretch occupies residues 1138-1169; the sequence is TSQSESNSFWDTSPLLLGKSPRDEDSSEEDSD. Positions 1204 to 1231 constitute an EGF-like 12; calcium-binding domain; it reads DIDECRELNQRGLLCKSERCVNTSGSFR. Intrachain disulfides connect C1208/C1223 and C1218/C1232. N1225 carries an N-linked (GlcNAc...) asparagine glycan.

It belongs to the LTBP family. Forms part of the large latent transforming growth factor beta (TGFB1) precursor complex; removal is essential for activation of complex. Interacts with EFEMP2. In terms of processing, contains hydroxylated asparagine residues. Post-translationally, two intrachain disulfide bonds from the TB3 domain are rearranged upon TGFB1 binding, and form interchain bonds with TGFB1 propeptide, anchoring it to the extracellular matrix.

The protein resides in the secreted. It is found in the extracellular space. The protein localises to the extracellular matrix. Functionally, key regulator of transforming growth factor beta (TGFB1, TGFB2 and TGFB3) that controls TGF-beta activation by maintaining it in a latent state during storage in extracellular space. Associates specifically via disulfide bonds with the Latency-associated peptide (LAP), which is the regulatory chain of TGF-beta, and regulates integrin-dependent activation of TGF-beta. The polypeptide is Latent-transforming growth factor beta-binding protein 3 (Ltbp3) (Mus musculus (Mouse)).